A 795-amino-acid chain; its full sequence is Copper-exporting P-type ATPase (795 aa).

2 HMA domains span residues 5–70 (QNAT…YDVV) and 72–138 (DKAE…YDAQ). Cu(+) contacts are provided by cysteine 16, cysteine 19, cysteine 83, and cysteine 86. A run of 6 helical transmembrane segments spans residues 161 to 181 (LMISTILSLPLLMTMLVHLFN), 187 to 207 (ILMNPWFQFILATPIQFIIGW), 224 to 244 (MDVLVALGTSAAYFYSIYEMI), 256 to 276 (LYFETSAVLITLILFGKYLEA), 412 to 432 (YFVPIVIAIALLTFLIWITLV), and 440 to 460 (ALVAAISVLVIACPCALGLAT). The active-site 4-aspartylphosphate intermediate is aspartate 496. Residues aspartate 690 and aspartate 694 each contribute to the Mg(2+) site. A run of 2 helical transmembrane segments spans residues 747-764 (NLFWAFGYNIAGIPIAAM) and 770-788 (WIAGAAMALSSVSVVSNAL).

It belongs to the cation transport ATPase (P-type) (TC 3.A.3) family. Type IB subfamily.

It localises to the cell membrane. It carries out the reaction Cu(+)(in) + ATP + H2O = Cu(+)(out) + ADP + phosphate + H(+). In terms of biological role, involved in copper export. The sequence is that of Copper-exporting P-type ATPase (copA) from Staphylococcus haemolyticus (strain JCSC1435).